The primary structure comprises 139 residues: Interleukin-5 (139 aa).

The first 19 residues, 1 to 19 (MMKILVCLPLLTLYAGCVY), serve as a signal peptide directing secretion. N-linked (GlcNAc...) asparagine glycosylation is found at N48, N77, and N91.

Belongs to the IL-5 family. As to quaternary structure, homodimer; disulfide-linked. Interacts with IL5RA. Interacts with CSF2RB.

Its subcellular location is the secreted. Homodimeric cytokine expressed predominantly by T-lymphocytes and NK cells that plays an important role in the survival, differentiation, and chemotaxis of eosinophils. Also acts on activated and resting B-cells to induce immunoglobulin production, growth, and differentiation. Mechanistically, exerts its biological effects through a receptor composed of IL5RA subunit and the cytokine receptor common subunit beta/CSF2RB. Binding to the receptor leads to activation of various kinases including LYN, SYK and JAK2 and thereby propagates signals through the RAS-MAPK and JAK-STAT5 pathways respectively. The polypeptide is Interleukin-5 (IL5) (Notamacropus eugenii (Tammar wallaby)).